The chain runs to 485 residues: Ribulose bisphosphate carboxylase large chain (485 aa).

A propeptide spanning residues 1-2 (MS) is cleaved from the precursor. The residue at position 3 (proline 3) is an N-acetylproline. Lysine 14 carries the N6,N6,N6-trimethyllysine modification. 2 residues coordinate substrate: asparagine 123 and threonine 173. The active-site Proton acceptor is the lysine 175. A substrate-binding site is contributed by lysine 177. Lysine 201, aspartate 203, and glutamate 204 together coordinate Mg(2+). N6-carboxylysine is present on lysine 201. Histidine 294 functions as the Proton acceptor in the catalytic mechanism. Residues arginine 295, histidine 327, and serine 379 each contribute to the substrate site.

The protein belongs to the RuBisCO large chain family. Type I subfamily. As to quaternary structure, heterohexadecamer of 8 large chains and 8 small chains; disulfide-linked. The disulfide link is formed within the large subunit homodimers. Requires Mg(2+) as cofactor. The disulfide bond which can form in the large chain dimeric partners within the hexadecamer appears to be associated with oxidative stress and protein turnover.

The protein localises to the plastid. Its subcellular location is the chloroplast. It carries out the reaction 2 (2R)-3-phosphoglycerate + 2 H(+) = D-ribulose 1,5-bisphosphate + CO2 + H2O. It catalyses the reaction D-ribulose 1,5-bisphosphate + O2 = 2-phosphoglycolate + (2R)-3-phosphoglycerate + 2 H(+). In terms of biological role, ruBisCO catalyzes two reactions: the carboxylation of D-ribulose 1,5-bisphosphate, the primary event in carbon dioxide fixation, as well as the oxidative fragmentation of the pentose substrate in the photorespiration process. Both reactions occur simultaneously and in competition at the same active site. In Flaveria bidentis (Coastal plain yellowtops), this protein is Ribulose bisphosphate carboxylase large chain.